The chain runs to 714 residues: Macrophage-expressed gene 1 protein (714 aa).

Residues 1 to 19 (MNSFMAIALIWMMIACAEA) form the signal peptide. Positions 30 to 345 (GFQTCKDTLK…TAVRHYYTFN (316 aa)) constitute an MACPF domain. A disulfide bridge links cysteine 34 with cysteine 70. Beta stranded transmembrane passes span 113–120 (FSINTELS) and 127–132 (GKFSTE). Residue asparagine 185 is glycosylated (N-linked (GlcNAc...) asparagine). The next 2 beta stranded transmembrane spans lie at 235 to 244 (TVTASAGIAF) and 248 to 256 (VNFKVETDH). N-linked (GlcNAc...) asparagine glycosylation occurs at asparagine 269. Residues cysteine 350 and cysteine 369 are joined by a disulfide bond. Residue asparagine 375 is glycosylated (N-linked (GlcNAc...) asparagine). Intrachain disulfides connect cysteine 385–cysteine 394, cysteine 432–cysteine 446, cysteine 436–cysteine 442, cysteine 531–cysteine 569, and cysteine 554–cysteine 574. Residues 410-653 (PSGYTPVHLL…GDGNGMSGGE (244 aa)) are P2. Residues 654-674 (AAGVTLGVIIALGIVITLAIY) form a helical membrane-spanning segment. The interval 690-714 (EQESLVGSFATDASPPNGEQDPCPA) is disordered.

It belongs to the MPEG1 family. In terms of assembly, homooligomer; predominantly forms a homooligomeric arc-shaped pore complex instead of complete rings of 16 subunits. Post-translationally, proteolytically processed in two steps to generate the Macrophage-expressed gene 1 protein, processed form: cleaved by trypsin in proximity of the helical transmembrane domain releases the ectodomain into the lysosomal lumen to orient the pore-forming domain toward the endogenous membranes, and processed by the asparagine endopeptidase (LGMN). Proteolytic processing in antigen-containing vesicles is pH-dependent. Monoubiquitinated in response to bacterial infection; ubiquitination is required for vesicular localization and antibacterial activity and can be blocked by bacterial cell cycle inhibiting factor (cif).

The protein localises to the cytoplasmic vesicle membrane. Its subcellular location is the cytoplasmic vesicle. The protein resides in the phagosome membrane. With respect to regulation, forms arc- and ring-shaped pre-pores on top of the membrane at neutral to slightly acidic pH conditions and converts to pores upon acidification. Undergoes transition from the pre-pore to the pore in a processive clockwise hand-over-hand process. In the pore state, 2 alpha-helical regions refold into transmembrane hairpins (TMH1 and TMH2) in each protomer that form in the ensemble complex giant beta-barrel transmembrane pores. In terms of biological role, pore-forming protein involved in both innate and adaptive immunity. Plays a central role in antigen cross-presentation in dendritic cells by forming a pore in antigen-containing compartments, thereby promoting delivery of antigens for cross-presentation. Also involved in innate immune response following bacterial infection; shows antibacterial activity against a wide spectrum of Gram-positive, Gram-negative and acid-fast bacteria. Reduces the viability of the intracytosolic pathogen L.monocytogenes by inhibiting acidification of the phagocytic vacuole of host cells which restricts bacterial translocation from the vacuole to the cytosol. Required for the antibacterial activity of reactive oxygen species and nitric oxide. Functionally, pore-forming protein that plays a central role in antigen cross-presentation in dendritic cells by mediating delivery of antigens for cross-presentation. Dendritic cells bridge innate and adaptive immunity by capturing exogenous antigens on MHC class-I molecules and presenting them to naive CD8(+) T-cells. Acts by forming a pore in antigen-containing compartments, promoting the release of antigens into the cytosol, enabling generation of MHCI:peptide complexes and T-cell priming. The chain is Macrophage-expressed gene 1 protein (Mpeg1) from Rattus norvegicus (Rat).